Consider the following 293-residue polypeptide: Bifunctional protein FolD (293 aa).

NADP(+) is bound by residues 169 to 171 (GRG), Thr-196, and Val-237.

This sequence belongs to the tetrahydrofolate dehydrogenase/cyclohydrolase family. In terms of assembly, homodimer.

The catalysed reaction is (6R)-5,10-methylene-5,6,7,8-tetrahydrofolate + NADP(+) = (6R)-5,10-methenyltetrahydrofolate + NADPH. The enzyme catalyses (6R)-5,10-methenyltetrahydrofolate + H2O = (6R)-10-formyltetrahydrofolate + H(+). The protein operates within one-carbon metabolism; tetrahydrofolate interconversion. Functionally, catalyzes the oxidation of 5,10-methylenetetrahydrofolate to 5,10-methenyltetrahydrofolate and then the hydrolysis of 5,10-methenyltetrahydrofolate to 10-formyltetrahydrofolate. This chain is Bifunctional protein FolD, found in Leifsonia xyli subsp. xyli (strain CTCB07).